Here is a 126-residue protein sequence, read N- to C-terminus: Histone H2B 1.2 (126 aa).

The segment covering 1 to 12 has biased composition (low complexity); it reads MPEPAKSAPAPK. Positions 1–35 are disordered; it reads MPEPAKSAPAPKKGSKKAVTKTPKKDGKKRRKSRK. An N6-acetyllysine mark is found at K6 and K13. The residue at position 15 (S15) is a Phosphoserine. An N6-acetyllysine mark is found at K16 and K21. An O-linked (GlcNAc) serine glycan is attached at S113. A Glycyl lysine isopeptide (Lys-Gly) (interchain with G-Cter in ubiquitin) cross-link involves residue K121.

Belongs to the histone H2B family. As to quaternary structure, the nucleosome is a histone octamer containing two molecules each of H2A, H2B, H3 and H4 assembled in one H3-H4 heterotetramer and two H2A-H2B heterodimers. The octamer wraps approximately 147 bp of DNA. In terms of processing, monoubiquitination of Lys-121 by BRE1 gives a specific tag for epigenetic transcriptional activation and is also prerequisite for histone H3 'Lys-4' and 'Lys-79' methylation. Post-translationally, phosphorylated on Ser-15 during developmentally programmed apoptosis; which may facilitate apoptotic chromatin condensation. GlcNAcylation at Ser-113 promotes monoubiquitination of Lys-121. It fluctuates in response to extracellular glucose, and associates with transcribed genes.

The protein localises to the nucleus. It is found in the chromosome. Functionally, core component of nucleosome. Nucleosomes wrap and compact DNA into chromatin, limiting DNA accessibility to the cellular machineries which require DNA as a template. Histones thereby play a central role in transcription regulation, DNA repair, DNA replication and chromosomal stability. DNA accessibility is regulated via a complex set of post-translational modifications of histones, also called histone code, and nucleosome remodeling. This chain is Histone H2B 1.2, found in Xenopus laevis (African clawed frog).